Consider the following 107-residue polypeptide: Small ribosomal subunit protein uS15 (107 aa).

N6-acetyllysine; alternate is present on Lys-27. Lys-27 carries the post-translational modification N6-succinyllysine; alternate. Lys-27 participates in a covalent cross-link: Glycyl lysine isopeptide (Lys-Gly) (interchain with G-Cter in ubiquitin). Ser-30 carries the phosphoserine modification. Lys-34 is modified (N6-succinyllysine). Tyr-38 carries the phosphotyrosine modification. Lys-43 participates in a covalent cross-link: Glycyl lysine isopeptide (Lys-Gly) (interchain with G-Cter in SUMO2).

It belongs to the universal ribosomal protein uS15 family. Component of the small ribosomal subunit. Part of the small subunit (SSU) processome, composed of more than 70 proteins and the RNA chaperone small nucleolar RNA (snoRNA) U3. Ubiquitinated at Lys-27 by RNF14 and RNF25 in response to ribosome collisions (ribosome stalling).

The protein resides in the cytoplasm. Its subcellular location is the nucleus. It localises to the nucleolus. Functionally, component of the small ribosomal subunit. The ribosome is a large ribonucleoprotein complex responsible for the synthesis of proteins in the cell. Part of the small subunit (SSU) processome, first precursor of the small eukaryotic ribosomal subunit. During the assembly of the SSU processome in the nucleolus, many ribosome biogenesis factors, an RNA chaperone and ribosomal proteins associate with the nascent pre-rRNA and work in concert to generate RNA folding, modifications, rearrangements and cleavage as well as targeted degradation of pre-ribosomal RNA by the RNA exosome. In Sus scrofa (Pig), this protein is Small ribosomal subunit protein uS15 (RPS13).